We begin with the raw amino-acid sequence, 173 residues long: Insertion element IS150 protein InsJ (173 aa).

The protein belongs to the IS150/IS1296 orfA family.

The sequence is that of Insertion element IS150 protein InsJ (insJ) from Escherichia coli (strain K12).